A 419-amino-acid chain; its full sequence is Tyrosine--tRNA ligase (419 aa).

Residue Tyr-34 coordinates L-tyrosine. The 'HIGH' region signature appears at Pro-39–His-48. L-tyrosine is bound by residues Tyr-168 and Gln-172. The 'KMSKS' region motif lies at Lys-230–Ser-234. Lys-233 is an ATP binding site. Residues Ala-352–Tyr-418 form the S4 RNA-binding domain.

The protein belongs to the class-I aminoacyl-tRNA synthetase family. TyrS type 1 subfamily. As to quaternary structure, homodimer.

It is found in the cytoplasm. The catalysed reaction is tRNA(Tyr) + L-tyrosine + ATP = L-tyrosyl-tRNA(Tyr) + AMP + diphosphate + H(+). In terms of biological role, catalyzes the attachment of tyrosine to tRNA(Tyr) in a two-step reaction: tyrosine is first activated by ATP to form Tyr-AMP and then transferred to the acceptor end of tRNA(Tyr). The protein is Tyrosine--tRNA ligase of Listeria monocytogenes serotype 4a (strain HCC23).